A 294-amino-acid chain; its full sequence is Elongation factor Ts, mitochondrial 2 (294 aa).

Belongs to the EF-Ts family.

It is found in the mitochondrion. Associates with the EF-Tu.GDP complex and induces the exchange of GDP to GTP. It remains bound to the aminoacyl-tRNA.EF-Tu.GTP complex up to the GTP hydrolysis stage on the ribosome. The chain is Elongation factor Ts, mitochondrial 2 from Paramecium tetraurelia.